The sequence spans 468 residues: Protein phosphatase ppm-1.A (468 aa).

A disordered region spans residues 1–23; the sequence is MTISRADLQIASSAEPKTHGNLN. Residues 106–381 form the PPM-type phosphatase domain; that stretch reads RYGMSSMQGW…DNMTMVVVCF (276 aa). Mn(2+) contacts are provided by aspartate 145, glycine 146, aspartate 329, and aspartate 372.

It belongs to the PP2C family. The cofactor is Mg(2+). Mn(2+) serves as cofactor. As to expression, expressed in neurons of the nerve ring and motor neurons of the ventral nerve cord.

It localises to the synapse. The catalysed reaction is O-phospho-L-seryl-[protein] + H2O = L-seryl-[protein] + phosphate. The enzyme catalyses O-phospho-L-threonyl-[protein] + H2O = L-threonyl-[protein] + phosphate. In terms of biological role, probable phosphatase which regulates axon termination in ALM and PLM neurons, and synaptic branch extension and/or stabilization in PLM neurons. Plays a role in synapse formation in GABAergic DD motor neurons probably by dephosphorylating pmk-3 thereby negatively regulating a MAP kinase pathway that includes dlk-1, mkk-4 and pmk-3. This is Protein phosphatase ppm-1.A from Caenorhabditis elegans.